Reading from the N-terminus, the 837-residue chain is Phosphatidylethanolamine N-methyltransferase (837 aa).

The Lumenal portion of the chain corresponds to 1 to 36 (MASDVVARTRSSGVTFTPPTTHDMVRSLFDPTVRKS). Residues 37–57 (FLEICITLALLSDFVFCYWGL) form a helical membrane-spanning segment. The Cytoplasmic segment spans residues 58–67 (QRFGLTSMKK). A helical membrane pass occupies residues 68–88 (AFLAQYLFWRLCYNLGIGVAL). At 89-148 (HLQSRYETWTNYAKRNHVFTKGNHTPLARFCQFELKTKMSEGYDMYSQPEELNVWLLFRQ) the chain is on the lumenal side. Residues 149-169 (FVDLILMQDFCTYMIYVYLSL) form a helical membrane-spanning segment. Residues 170-173 (PAQW) are Cytoplasmic-facing. A helical transmembrane segment spans residues 174 to 194 (SAMLNWRTGLGVSMILFNIWV). Over 195–205 (KVDAHRVVKDY) the chain is Lumenal. A helical transmembrane segment spans residues 206–226 (AWYWGDFFFLQESELVFDGVF). Residues 227 to 235 (NISPHPMYS) are Cytoplasmic-facing. A helical membrane pass occupies residues 236–256 (IGYMGYYGLSLICGNYHVLLV). Topologically, residues 257-322 (SISGHLLQFL…SGFWVNNFDK (66 aa)) are lumenal. Residues 323 to 343 (LRFTDYFTVGTSLALICWLFL) traverse the membrane as a helical segment. Residues 344-349 (ERPSVK) lie on the Cytoplasmic side of the membrane. Residues 350-370 (LLFNLTFFTKFVTSIVVCSIL) form a helical membrane-spanning segment. The Lumenal segment spans residues 371–396 (YLQSSQKWFTKLYLKNGYTQVYSYQQ). A helical membrane pass occupies residues 397 to 417 (WQFIYNFSSCLTYTLLFIQTL). Residues 418–424 (AKLFDDN) are Cytoplasmic-facing. Residues 425–445 (TYIEYTQFIFGLLLCAVQTWC) form a helical membrane-spanning segment. Over 446 to 505 (NAEIRSAISDFGWFYGDFFLSNYIPTKSLTSHGIYRYLNNPETILGVAGVWGTVLMTDFS) the chain is Lumenal. Residues 506–526 (WENIALACLWSGCNFIIVKFI) form a helical membrane-spanning segment. Topologically, residues 527 to 837 (EQPHMAKLYG…HIKKVLDDLE (311 aa)) are cytoplasmic.

The protein belongs to the class VI-like SAM-binding methyltransferase superfamily. CHO2 family.

Its subcellular location is the endoplasmic reticulum membrane. The enzyme catalyses a 1,2-diacyl-sn-glycero-3-phosphoethanolamine + S-adenosyl-L-methionine = a 1,2-diacyl-sn-glycero-3-phospho-N-methylethanolamine + S-adenosyl-L-homocysteine + H(+). It participates in phospholipid metabolism; phosphatidylcholine biosynthesis. In terms of biological role, catalyzes the first step of the methylation pathway of phosphatidylcholine biosynthesis, the SAM-dependent methylation of phosphatidylethanolamine (PE) to phosphatidylmonomethylethanolamine (PMME). The chain is Phosphatidylethanolamine N-methyltransferase (CHO2) from Zygosaccharomyces rouxii (strain ATCC 2623 / CBS 732 / NBRC 1130 / NCYC 568 / NRRL Y-229).